Here is a 195-residue protein sequence, read N- to C-terminus: Probable nicotinate-nucleotide adenylyltransferase (195 aa).

Belongs to the NadD family.

The enzyme catalyses nicotinate beta-D-ribonucleotide + ATP + H(+) = deamido-NAD(+) + diphosphate. It functions in the pathway cofactor biosynthesis; NAD(+) biosynthesis; deamido-NAD(+) from nicotinate D-ribonucleotide: step 1/1. In terms of biological role, catalyzes the reversible adenylation of nicotinate mononucleotide (NaMN) to nicotinic acid adenine dinucleotide (NaAD). The sequence is that of Probable nicotinate-nucleotide adenylyltransferase from Dictyoglomus thermophilum (strain ATCC 35947 / DSM 3960 / H-6-12).